Reading from the N-terminus, the 523-residue chain is 2-isopropylmalate synthase (523 aa).

Residues 5–267 (VVIFDTTLRD…QTRINHNEIW (263 aa)) enclose the Pyruvate carboxyltransferase domain. Mn(2+)-binding residues include D14, H202, H204, and N238. The interval 392–523 (RMDYFSVQSG…QNKENNKETV (132 aa)) is regulatory domain.

It belongs to the alpha-IPM synthase/homocitrate synthase family. LeuA type 1 subfamily. Homodimer. The cofactor is Mn(2+).

Its subcellular location is the cytoplasm. It catalyses the reaction 3-methyl-2-oxobutanoate + acetyl-CoA + H2O = (2S)-2-isopropylmalate + CoA + H(+). Its pathway is amino-acid biosynthesis; L-leucine biosynthesis; L-leucine from 3-methyl-2-oxobutanoate: step 1/4. Catalyzes the condensation of the acetyl group of acetyl-CoA with 3-methyl-2-oxobutanoate (2-ketoisovalerate) to form 3-carboxy-3-hydroxy-4-methylpentanoate (2-isopropylmalate). The sequence is that of 2-isopropylmalate synthase from Enterobacter sp. (strain 638).